Reading from the N-terminus, the 393-residue chain is NAD(P)H-quinone oxidoreductase subunit H, chloroplastic (393 aa).

This sequence belongs to the complex I 49 kDa subunit family. As to quaternary structure, NDH is composed of at least 16 different subunits, 5 of which are encoded in the nucleus.

It localises to the plastid. Its subcellular location is the chloroplast thylakoid membrane. The catalysed reaction is a plastoquinone + NADH + (n+1) H(+)(in) = a plastoquinol + NAD(+) + n H(+)(out). It carries out the reaction a plastoquinone + NADPH + (n+1) H(+)(in) = a plastoquinol + NADP(+) + n H(+)(out). Its function is as follows. NDH shuttles electrons from NAD(P)H:plastoquinone, via FMN and iron-sulfur (Fe-S) centers, to quinones in the photosynthetic chain and possibly in a chloroplast respiratory chain. The immediate electron acceptor for the enzyme in this species is believed to be plastoquinone. Couples the redox reaction to proton translocation, and thus conserves the redox energy in a proton gradient. The protein is NAD(P)H-quinone oxidoreductase subunit H, chloroplastic of Populus alba (White poplar).